The chain runs to 266 residues: Type III pantothenate kinase (266 aa).

15 to 22 (EIGNSSTS) contacts ATP. Residues Y105 and 112–115 (GADR) each bind substrate. Catalysis depends on D114, which acts as the Proton acceptor. Residue D135 coordinates K(+). Position 138 (T138) interacts with ATP. Residue T191 participates in substrate binding.

The protein belongs to the type III pantothenate kinase family. As to quaternary structure, homodimer. Requires NH4(+) as cofactor. The cofactor is K(+).

The protein resides in the cytoplasm. It catalyses the reaction (R)-pantothenate + ATP = (R)-4'-phosphopantothenate + ADP + H(+). Its pathway is cofactor biosynthesis; coenzyme A biosynthesis; CoA from (R)-pantothenate: step 1/5. Catalyzes the phosphorylation of pantothenate (Pan), the first step in CoA biosynthesis. The sequence is that of Type III pantothenate kinase from Chlorobium chlorochromatii (strain CaD3).